The sequence spans 289 residues: Ribonuclease Z (289 aa).

Zn(2+) contacts are provided by His63, His65, Asp67, His68, His143, Asp197, and His255. Asp67 serves as the catalytic Proton acceptor.

It belongs to the RNase Z family. In terms of assembly, homodimer. The cofactor is Zn(2+).

It catalyses the reaction Endonucleolytic cleavage of RNA, removing extra 3' nucleotides from tRNA precursor, generating 3' termini of tRNAs. A 3'-hydroxy group is left at the tRNA terminus and a 5'-phosphoryl group is left at the trailer molecule.. In terms of biological role, zinc phosphodiesterase, which displays some tRNA 3'-processing endonuclease activity. Probably involved in tRNA maturation, by removing a 3'-trailer from precursor tRNA. This is Ribonuclease Z from Azobacteroides pseudotrichonymphae genomovar. CFP2.